The following is a 377-amino-acid chain: Progesterone receptor (377 aa).

The interval 1 to 15 (EASQSPQYSFESLPQ) is modulating, Pro-Rich. The segment at residues 16–90 (KICLICGDEA…AGMVLGGRKF (75 aa)) is a DNA-binding region (nuclear receptor). 2 consecutive NR C4-type zinc fingers follow at residues 18–38 (CLIC…CGSC) and 54–78 (CAGR…LRKC). Serine 127 carries the phosphoserine modification. The NR LBD domain maps to 130 to 364 (QDLQLIPPLI…EFPEMMSEVI (235 aa)). The segment at 138–377 (LINLLMSIEP…LPKILAGMVK (240 aa)) is AF2; mediates transcriptional activation.

Belongs to the nuclear hormone receptor family. NR3 subfamily. In terms of assembly, interacts with CUEDC2, SMARD1 and with UNC45A. Interacts with PRMT2. Interacts with NCOA2 and NCOA1. Interacts with KLF9. Interacts with GTF2B. Post-translationally, palmitoylated by ZDHHC7 and ZDHHC21. Palmitoylation is required for plasma membrane targeting and for rapid intracellular signaling via ERK and AKT kinases and cAMP generation.

It is found in the nucleus. Functionally, the steroid hormones and their receptors are involved in the regulation of eukaryotic gene expression and affect cellular proliferation and differentiation in target tissues. Transcriptional activator of several progesteron-dependent promoters in a variety of cell types. Involved in activation of SRC-dependent MAPK signaling on hormone stimulation. This chain is Progesterone receptor (PGR), found in Ovis aries (Sheep).